We begin with the raw amino-acid sequence, 200 residues long: Vacuolar iron transporter homolog 3 (200 aa).

Residues 1–31 lie on the Cytoplasmic side of the membrane; the sequence is MESHNTLNLDMEKDQEKAFDYSKRAQWLRAA. A helical transmembrane segment spans residues 32-52; sequence VLGANDGLVSTASLMMGVGAV. Topologically, residues 53–59 are vacuolar; it reads KQNVKIM. The chain crosses the membrane as a helical span at residues 60 to 80; the sequence is ILTGFAGLVAGACSMAIGEFV. Residues 81–113 lie on the Cytoplasmic side of the membrane; it reads SVYSQYDIEVAQMKRETGGEIEKEKLPSPTQAA. Residues 114–134 form a helical membrane-spanning segment; that stretch reads AASALAFSLGAMVPLLAAAFV. The Vacuolar portion of the chain corresponds to 135–140; sequence KEYKVR. The helical transmembrane segment at 141–161 threads the bilayer; the sequence is IGAIVAAVTLALVMFGWLGAV. Over 162–173 the chain is Cytoplasmic; the sequence is LGKAPVVKSSLR. A helical membrane pass occupies residues 174–194; sequence VLVGGWLAMAITYGFTKLIGS. The Vacuolar segment spans residues 195 to 200; it reads HSHMYV.

Belongs to the CCC1 family.

Its subcellular location is the vacuole membrane. The enzyme catalyses Fe(2+)(in) = Fe(2+)(out). Its function is as follows. Probable vacuolar iron transporter that may be involved in the regulation of iron distribution throughout the plant. In Arabidopsis thaliana (Mouse-ear cress), this protein is Vacuolar iron transporter homolog 3.